The following is a 706-amino-acid chain: Translation initiation factor IF-2 (706 aa).

The tract at residues 55 to 117 (KEVNSDSNQE…PTMKDEKGLI (63 aa)) is disordered. A compositionally biased stretch (basic and acidic residues) spans 67–81 (VNTDDKLDKIDKPNK). Over residues 93–108 (KNKKSKKKQKNKKKGP) the composition is skewed to basic residues. The tr-type G domain occupies 208 to 375 (SRPPVVTVMG…MILLVSEVEE (168 aa)). The tract at residues 217-224 (GHVDHGKT) is G1. 217–224 (GHVDHGKT) contacts GTP. A G2 region spans residues 242–246 (GITQH). The segment at 263 to 266 (DTPG) is G3. GTP contacts are provided by residues 263 to 267 (DTPGH) and 317 to 320 (NKID). Residues 317–320 (NKID) form a G4 region. Residues 353-355 (SAI) form a G5 region.

It belongs to the TRAFAC class translation factor GTPase superfamily. Classic translation factor GTPase family. IF-2 subfamily.

It is found in the cytoplasm. Its function is as follows. One of the essential components for the initiation of protein synthesis. Protects formylmethionyl-tRNA from spontaneous hydrolysis and promotes its binding to the 30S ribosomal subunits. Also involved in the hydrolysis of GTP during the formation of the 70S ribosomal complex. The polypeptide is Translation initiation factor IF-2 (Alkaliphilus metalliredigens (strain QYMF)).